A 276-amino-acid chain; its full sequence is Diaminopimelate epimerase (276 aa).

The substrate site is built by asparagine 13, glutamine 46, and asparagine 66. Cysteine 75 serves as the catalytic Proton donor. Substrate-binding positions include 76–77, asparagine 159, asparagine 192, and 210–211; these read GN and ER. The active-site Proton acceptor is the cysteine 219. 220 to 221 contacts substrate; that stretch reads GT.

Belongs to the diaminopimelate epimerase family. As to quaternary structure, homodimer.

The protein resides in the cytoplasm. It carries out the reaction (2S,6S)-2,6-diaminopimelate = meso-2,6-diaminopimelate. Its pathway is amino-acid biosynthesis; L-lysine biosynthesis via DAP pathway; DL-2,6-diaminopimelate from LL-2,6-diaminopimelate: step 1/1. Its function is as follows. Catalyzes the stereoinversion of LL-2,6-diaminopimelate (L,L-DAP) to meso-diaminopimelate (meso-DAP), a precursor of L-lysine and an essential component of the bacterial peptidoglycan. The sequence is that of Diaminopimelate epimerase from Pseudomonas syringae pv. tomato (strain ATCC BAA-871 / DC3000).